Reading from the N-terminus, the 605-residue chain is Protein phosphatase 1D (605 aa).

Residues 1 to 101 form an interaction with CHEK1 region; that stretch reads MAGLYSLGVS…CRRRSSVAFF (101 aa). Positions 8 to 375 constitute a PPM-type phosphatase domain; the sequence is GVSVFSDQGG…DNTSAIVICI (368 aa). A disordered region spans residues 28-90; it reads VVEPEPTAEE…DAGASPAPSR (63 aa). Phosphoserine occurs at positions 40 and 85. Residues Asp105, Gly106, Asp314, and Asp366 each contribute to the Mn(2+) site. The disordered stretch occupies residues 516-591; that stretch reads STPGQMKAQE…RRLRGQKKIG (76 aa). Composition is skewed to polar residues over residues 530 to 544 and 555 to 577; these read PPTN…SNSG and LSRS…NSVK. Basic residues predominate over residues 579–588; it reads TMRRRLRGQK.

It belongs to the PP2C family. As to quaternary structure, interacts with CHEK1 and CHEK2; dephosphorylates them. Interacts with MAPK14. Requires Mg(2+) as cofactor. Mn(2+) serves as cofactor. Expressed in fetal and adult brain. Also detected in fetal liver and skeletal muscle, but not in their adult counterparts.

The protein resides in the nucleus. Its subcellular location is the cytoplasm. It localises to the cytosol. The catalysed reaction is O-phospho-L-seryl-[protein] + H2O = L-seryl-[protein] + phosphate. It catalyses the reaction O-phospho-L-threonyl-[protein] + H2O = L-threonyl-[protein] + phosphate. Involved in the negative regulation of p53 expression. Required for the relief of p53-dependent checkpoint mediated cell cycle arrest. Binds to and dephosphorylates 'Ser-15' of TP53 and 'Ser-345' of CHEK1 which contributes to the functional inactivation of these proteins. Mediates MAPK14 dephosphorylation and inactivation. Is also an important regulator of global heterochromatin silencing and critical in maintaining genome integrity. The chain is Protein phosphatase 1D (PPM1D) from Homo sapiens (Human).